A 644-amino-acid chain; its full sequence is 1-deoxy-D-xylulose-5-phosphate synthase (644 aa).

Thiamine diphosphate is bound by residues H78 and 120 to 122 (GHA). Residue D149 coordinates Mg(2+). Residues 150–151 (AA), N178, and E373 contribute to the thiamine diphosphate site. N178 lines the Mg(2+) pocket.

Belongs to the transketolase family. DXPS subfamily. Homodimer. The cofactor is Mg(2+). Thiamine diphosphate serves as cofactor.

The catalysed reaction is D-glyceraldehyde 3-phosphate + pyruvate + H(+) = 1-deoxy-D-xylulose 5-phosphate + CO2. It participates in metabolic intermediate biosynthesis; 1-deoxy-D-xylulose 5-phosphate biosynthesis; 1-deoxy-D-xylulose 5-phosphate from D-glyceraldehyde 3-phosphate and pyruvate: step 1/1. Functionally, catalyzes the acyloin condensation reaction between C atoms 2 and 3 of pyruvate and glyceraldehyde 3-phosphate to yield 1-deoxy-D-xylulose-5-phosphate (DXP). The sequence is that of 1-deoxy-D-xylulose-5-phosphate synthase from Chlamydia felis (strain Fe/C-56) (Chlamydophila felis).